Reading from the N-terminus, the 593-residue chain is Proline--tRNA ligase (593 aa).

This sequence belongs to the class-II aminoacyl-tRNA synthetase family. ProS type 1 subfamily. Homodimer.

The protein resides in the cytoplasm. It carries out the reaction tRNA(Pro) + L-proline + ATP = L-prolyl-tRNA(Pro) + AMP + diphosphate. Catalyzes the attachment of proline to tRNA(Pro) in a two-step reaction: proline is first activated by ATP to form Pro-AMP and then transferred to the acceptor end of tRNA(Pro). As ProRS can inadvertently accommodate and process non-cognate amino acids such as alanine and cysteine, to avoid such errors it has two additional distinct editing activities against alanine. One activity is designated as 'pretransfer' editing and involves the tRNA(Pro)-independent hydrolysis of activated Ala-AMP. The other activity is designated 'posttransfer' editing and involves deacylation of mischarged Ala-tRNA(Pro). The misacylated Cys-tRNA(Pro) is not edited by ProRS. The sequence is that of Proline--tRNA ligase from Synechococcus sp. (strain CC9902).